A 361-amino-acid chain; its full sequence is Phosphoserine aminotransferase (361 aa).

Arginine 43 lines the L-glutamate pocket. Residues 77 to 78 (AS), tryptophan 103, threonine 152, aspartate 172, and glutamine 195 contribute to the pyridoxal 5'-phosphate site. An N6-(pyridoxal phosphate)lysine modification is found at lysine 196. Residue 237-238 (NT) coordinates pyridoxal 5'-phosphate.

Belongs to the class-V pyridoxal-phosphate-dependent aminotransferase family. SerC subfamily. In terms of assembly, homodimer. It depends on pyridoxal 5'-phosphate as a cofactor.

The protein resides in the cytoplasm. The enzyme catalyses O-phospho-L-serine + 2-oxoglutarate = 3-phosphooxypyruvate + L-glutamate. It carries out the reaction 4-(phosphooxy)-L-threonine + 2-oxoglutarate = (R)-3-hydroxy-2-oxo-4-phosphooxybutanoate + L-glutamate. The protein operates within amino-acid biosynthesis; L-serine biosynthesis; L-serine from 3-phospho-D-glycerate: step 2/3. It participates in cofactor biosynthesis; pyridoxine 5'-phosphate biosynthesis; pyridoxine 5'-phosphate from D-erythrose 4-phosphate: step 3/5. Its function is as follows. Catalyzes the reversible conversion of 3-phosphohydroxypyruvate to phosphoserine and of 3-hydroxy-2-oxo-4-phosphonooxybutanoate to phosphohydroxythreonine. The sequence is that of Phosphoserine aminotransferase from Desulfosudis oleivorans (strain DSM 6200 / JCM 39069 / Hxd3) (Desulfococcus oleovorans).